Reading from the N-terminus, the 164-residue chain is Transcription antitermination protein NusB (164 aa).

This sequence belongs to the NusB family.

Its function is as follows. Involved in transcription antitermination. Required for transcription of ribosomal RNA (rRNA) genes. Binds specifically to the boxA antiterminator sequence of the ribosomal RNA (rrn) operons. This is Transcription antitermination protein NusB from Chlorobium limicola (strain DSM 245 / NBRC 103803 / 6330).